A 170-amino-acid polypeptide reads, in one-letter code: Disulfide bond formation protein B 1 (170 aa).

Over 1-14 (MNDYTLAIRRERRL) the chain is Cytoplasmic. The chain crosses the membrane as a helical span at residues 15–31 (LMLLGWVCIALLAGALY). Residues 32–49 (LQYVKNEDPCPLCIIQRY) are Periplasmic-facing. A disulfide bond links C41 and C44. A helical transmembrane segment spans residues 50-64 (FFCAIGIFAFLAAGI). Residues 65-71 (RNWRGVW) are Cytoplasmic-facing. The chain crosses the membrane as a helical span at residues 72–89 (VLELLIAIAAAGGVGTAA). Over 90-144 (RHLTIQMNPGFSCGFDTLQPIVDSLPPAQWFPGMFKVAGLCETVYPPIFGILLPG) the chain is Periplasmic. C102 and C130 are oxidised to a cystine. Residues 145 to 163 (WSLIGFAVILIAVVASLWR) traverse the membrane as a helical segment. The Cytoplasmic portion of the chain corresponds to 164–170 (HRRKLVG).

Belongs to the DsbB family.

The protein localises to the cell inner membrane. Functionally, required for disulfide bond formation in some periplasmic proteins. Acts by oxidizing the DsbA protein. In Burkholderia lata (strain ATCC 17760 / DSM 23089 / LMG 22485 / NCIMB 9086 / R18194 / 383), this protein is Disulfide bond formation protein B 1.